Here is a 186-residue protein sequence, read N- to C-terminus: MVDPKESIDIENVVASTGIGQELDLESVAMDLEGADYDPEQFPGLVYRTQDPKSAALIFRSGKIVCTGAKSTDDVHQSLRIVFDKLRDLNIQVDDDPEIVVQNIVSSADLGSSLNLNAIAIGLGLENIEYEPEQFPGLVYRLDEPDVVALLFGSGKLVVTGGKRKEDAEEAVDTIVERLSDLGLLD.

2 tandem repeats follow at residues 10–86 (IENV…FDKL) and 101–179 (VQNI…VERL).

Belongs to the TBP family.

General factor that plays a role in the activation of archaeal genes transcribed by RNA polymerase. Binds specifically to the TATA box promoter element which lies close to the position of transcription initiation. This is TATA-box-binding protein from Haloarcula marismortui (strain ATCC 43049 / DSM 3752 / JCM 8966 / VKM B-1809) (Halobacterium marismortui).